We begin with the raw amino-acid sequence, 208 residues long: Protein GrpE (208 aa).

The span at 1–25 (MVDNKDFNEELKENIQEELDNETKA) shows a compositional bias: basic and acidic residues. The disordered stretch occupies residues 1–38 (MVDNKDFNEELKENIQEELDNETKAENPNIDEEVEEVS). The span at 29-38 (NIDEEVEEVS) shows a compositional bias: acidic residues.

This sequence belongs to the GrpE family. As to quaternary structure, homodimer.

Its subcellular location is the cytoplasm. Participates actively in the response to hyperosmotic and heat shock by preventing the aggregation of stress-denatured proteins, in association with DnaK and GrpE. It is the nucleotide exchange factor for DnaK and may function as a thermosensor. Unfolded proteins bind initially to DnaJ; upon interaction with the DnaJ-bound protein, DnaK hydrolyzes its bound ATP, resulting in the formation of a stable complex. GrpE releases ADP from DnaK; ATP binding to DnaK triggers the release of the substrate protein, thus completing the reaction cycle. Several rounds of ATP-dependent interactions between DnaJ, DnaK and GrpE are required for fully efficient folding. This is Protein GrpE from Clostridium perfringens (strain 13 / Type A).